The chain runs to 231 residues: Type 3 secretion system stator protein (231 aa).

As to quaternary structure, the core secretion machinery of the T3SS is composed of approximately 20 different proteins, including cytoplasmic components, a base, an export apparatus and a needle. This subunit is part of the cytosolic complex. Interacts directly with Spa47/SctN (T3SS ATPase) and Spa33/SctQ (the major sorting platform component). Homodimer in solution.

It is found in the cytoplasm. Functionally, component of the type III secretion system (T3SS), also called injectisome, which is used to inject bacterial effector proteins into eukaryotic host cells. Acts as a regulator of the Spa47/SctN ATPase activity. It down-regulates the ATPase activity of the oligomeric Spa47/SctN, while it up-regulates the activity of the monomeric form. Important for translocation of MxiH/SctF, the major needle component. This chain is Type 3 secretion system stator protein, found in Shigella flexneri.